The sequence spans 863 residues: Eukaryotic translation initiation factor 3 subunit C (863 aa).

Residues 1–92 are disordered; sequence MSRFFRGGDD…VKSAKDKRFD (92 aa). The span at 16–53 shows a compositional bias: acidic residues; the sequence is SSDEEELYSTSEEEEEEDQDQEESSEEEDEEESSDEDE. The segment covering 79–92 has biased composition (basic and acidic residues); sequence GATKVKSAKDKRFD. The PCI domain occupies 604 to 778; that stretch reads FHMHINLELL…KTVIFRKGVE (175 aa). The disordered stretch occupies residues 808-863; that stretch reads TQGSANAFSRKDGRQGGQRGGGQRSGRGGARAGGNAQRQAGGTQFTGGALGAAVRG. Residues 822–839 are compositionally biased toward gly residues; the sequence is QGGQRGGGQRSGRGGARA. The segment covering 840-850 has biased composition (low complexity); it reads GGNAQRQAGGT.

This sequence belongs to the eIF-3 subunit C family. As to quaternary structure, component of the eukaryotic translation initiation factor 3 (eIF-3) complex.

It localises to the cytoplasm. Functionally, component of the eukaryotic translation initiation factor 3 (eIF-3) complex, which is involved in protein synthesis of a specialized repertoire of mRNAs and, together with other initiation factors, stimulates binding of mRNA and methionyl-tRNAi to the 40S ribosome. The eIF-3 complex specifically targets and initiates translation of a subset of mRNAs involved in cell proliferation. The sequence is that of Eukaryotic translation initiation factor 3 subunit C from Chaetomium globosum (strain ATCC 6205 / CBS 148.51 / DSM 1962 / NBRC 6347 / NRRL 1970) (Soil fungus).